A 136-amino-acid polypeptide reads, in one-letter code: MLSTILRNNFVRRSFSSRIFSQNEYETAADSTLERLSDYFDQIADSFPVSEQFDVSHAMGVLTVNVSKSVGTYVINKQSPNKQIWLSSPMSGPKRYDLEEEGKWTYAHDGEQLDSLLNREFRKILADDRIDFSRHV.

This sequence belongs to the frataxin family. Monomer. Oligomer.

Its subcellular location is the mitochondrion. The enzyme catalyses 4 Fe(2+) + O2 + 4 H(+) = 4 Fe(3+) + 2 H2O. In terms of biological role, promotes the biosynthesis of heme as well as the assembly and repair of iron-sulfur clusters by delivering Fe(2+) to proteins involved in these pathways. May play a role in the protection against iron-catalyzed oxidative stress through its ability to catalyze the oxidation of Fe(2+) to Fe(3+). May be able to store large amounts of the metal in the form of a ferrihydrite mineral by oligomerization. The chain is Frataxin, mitochondrial (frh-1) from Caenorhabditis elegans.